The chain runs to 253 residues: tRNA (guanine-N(1)-)-methyltransferase (253 aa).

S-adenosyl-L-methionine contacts are provided by residues G110 and 130 to 135 (IGDYIL).

The protein belongs to the RNA methyltransferase TrmD family. Homodimer.

The protein resides in the cytoplasm. It catalyses the reaction guanosine(37) in tRNA + S-adenosyl-L-methionine = N(1)-methylguanosine(37) in tRNA + S-adenosyl-L-homocysteine + H(+). Functionally, specifically methylates guanosine-37 in various tRNAs. This chain is tRNA (guanine-N(1)-)-methyltransferase, found in Carboxydothermus hydrogenoformans (strain ATCC BAA-161 / DSM 6008 / Z-2901).